The chain runs to 849 residues: Putative pentatricopeptide repeat-containing protein At5g08490 (849 aa).

20 PPR repeats span residues 20–54, 55–89, 121–155, 156–187, 188–222, 223–260, 262–296, 297–327, 329–363, 365–399, 400–430, 431–465, 469–499, 501–531, 532–566, 567–597, 601–631, 632–666, 667–702, and 703–733; these read DHRV…GHIA, CSEV…DPVV, SSVT…GLEK, DTLV…IADK, DVVS…PTEP, NYAT…SWLQ, HVFV…DLVS, WNVV…GDVS, DSVT…SYLL, DTSV…DIIS, WNAI…AITL, DSVT…GLLH, EPKL…LSER, TLVS…MSTT, DLTT…GMRP, NTVT…IIRG, DIRL…DARR, DLVM…NIKP, DHVF…GMKP, and TMEQ…MPVE. The interval 738-813 is type E motif; that stretch reads IWGTLLRACT…PAGCSWLEVD (76 aa). The interval 814 to 844 is type E(+) motif; it reads GQRNVFVSGDCSHPRRDSIFDLVNALYLQMK.

Belongs to the PPR family. PCMP-E subfamily.

In Arabidopsis thaliana (Mouse-ear cress), this protein is Putative pentatricopeptide repeat-containing protein At5g08490 (PCMP-E32).